The sequence spans 428 residues: Spliceosome RNA helicase DDX39B (428 aa).

The span at 1 to 19 shows a compositional bias: acidic residues; the sequence is MAENDVDNELLDYEEDEVE. Positions 1–32 are disordered; sequence MAENDVDNELLDYEEDEVETAAGGDGSEAPAK. Ala2 is modified (N-acetylalanine). Lys36 is modified (N6-acetyllysine; alternate). A Glycyl lysine isopeptide (Lys-Gly) (interchain with G-Cter in SUMO2); alternate cross-link involves residue Lys36. 2 positions are modified to phosphoserine: Ser38 and Ser41. The short motif at 45-73 is the Q motif element; it reads SGFRDFLLKPELLRAIVDCGFEHPSEVQH. Positions 76 to 249 constitute a Helicase ATP-binding domain; it reads IPQAILGMDV…RKFMQDPMEI (174 aa). 89–96 serves as a coordination point for ATP; it reads AKSGMGKT. The residue at position 172 (Thr172) is a Phosphothreonine. The DECD box motif lies at 196-199; that stretch reads DECD. In terms of domain architecture, Helicase C-terminal spans 261 to 422; sequence GLQQYYVKLK…ELPDEIDISS (162 aa).

This sequence belongs to the DEAD box helicase family. DECD subfamily. Homodimer, and heterodimer with DDX39A. DDX39B interacts with the THO subcomplex to form the THO-DDX39B complex which multimerizes into a 28-subunit tetrameric assembly. Component of the transcription/export (TREX) complex at least composed of ALYREF/THOC4, DDX39B, SARNP/CIP29, CHTOP and the THO subcomplex; in the complex interacts with THOC2. THOC1-THOC2-THOC3-DDX39B subcomplex is sufficient for the interaction with export factor NXF1-NXT1. TREX seems to have a dynamic structure involving ATP-dependent remodeling. Within the TREX complex bridges ALYREF/THOC4 and the THO subcomplex, and, in a ATP-dependent manner, ALYREF/THOC4 and SARNP/CIP29. Component of the spliceosome. Interacts directly with U2AF2. Interacts with RBM8A, RNPS1 and SRRM1, FYTTD1/UIF, THOC1, MX1 and POLDIP3. Interacts with LUZP4. Interacts with SARNP/CIP29 (via the C-terminal domain); the interaction is direct and facilitates RNA binding of DDX39B.

It localises to the nucleus. The protein resides in the nucleus speckle. Its subcellular location is the cytoplasm. It carries out the reaction ATP + H2O = ADP + phosphate + H(+). Its function is as follows. Involved in nuclear export of spliced and unspliced mRNA. Component of the TREX complex which is thought to couple mRNA transcription, processing and nuclear export, and specifically associates with spliced mRNA and not with unspliced pre-mRNA. The TREX complex is recruited to spliced mRNAs by a transcription-independent mechanism, binds to mRNA upstream of the exon-junction complex (EJC) and is recruited in a splicing- and cap-dependent manner to a region near the 5' end of the mRNA where it functions in mRNA export to the cytoplasm via the TAP/NXF1 pathway. The THOC1-THOC2-THOC3 core complex alone is sufficient to promote ATPase activity of DDX39B; in the complex THOC2 is the only component that directly interacts with DDX39B. Associates with SARNP/CIP29, which facilitates RNA binding of DDX39B and likely plays a role in mRNA export. May undergo several rounds of ATP hydrolysis during assembly of TREX to drive subsequent loading of components such as ALYREF/THOC4 and CHTOP onto mRNA. Also associates with pre-mRNA independent of ALYREF/THOC4. Involved in the nuclear export of intronless mRNA; the ATP-bound form is proposed to recruit export adapter ALYREF/THOC4 to intronless mRNA; its ATPase activity is cooperatively stimulated by RNA and ALYREF/THOC4 and ATP hydrolysis is thought to trigger the dissociation from RNA to allow the association of ALYREF/THOC4 and the NXF1-NXT1 heterodimer. Involved in transcription elongation and genome stability. In terms of biological role, splice factor that is required for the first ATP-dependent step in spliceosome assembly and for the interaction of U2 snRNP with the branchpoint. Has both RNA-stimulated ATP binding/hydrolysis activity and ATP-dependent RNA unwinding activity. Even with the stimulation of RNA, the ATPase activity is weak. Can only hydrolyze ATP but not other NTPs. The RNA stimulation of ATPase activity does not have a strong preference for the sequence and length of the RNA. However, ssRNA stimulates the ATPase activity much more strongly than dsRNA. Can unwind 5' or 3' overhangs or blunt end RNA duplexes in vitro. The ATPase and helicase activities are not influenced by U2AF2; the effect of ALYREF/THOC4 is reported conflictingly. This Canis lupus familiaris (Dog) protein is Spliceosome RNA helicase DDX39B (DDX39B).